An 877-amino-acid chain; its full sequence is MAAERYNPRVAEAHWQKVWEENRTFETDNSDSREKYYVLEMFPYPSGRIHMGHVRNYAMGDVVARYKRAKGFNVLHPMGWDAFGMPAENAAMQNKVHPKEWTYQNIATMKRQLKSMGLSLDWSREFATCDVEYYHRQQMLFIDLYEKGLVTRKTSKVNWDPVDNTVLANEQVVDGRGWRSGALVEQRELTQWFFKITDFSEELLAGLDTLDQWPEKVRLMQRNWIGKSEGLQVRFALAAGTAPAGFSEVEVYTTRPDTLFGAAFVAISADHPLAKKLSEGNAALSSFIEECHQQGTSLAALETAEKKGFDTGIKVKHPFDDNWELPVYVANFVLMEYGTGAVFGCPAHDQRDLDFANKYKLKVTPVVLPKGEDAASFSIGETAYTDDGVMINSRFLDGMTPEAAFNEVASRLEKTDLVGRPQAVRKVQFRLRDWGISRQRYWGCPIPMIHCESCGVNPVPRADLPVKLPDDVEFDRPGNPLDRHATWRHVKCPKCGGDARRETDTMDTFVDSSWYYTRFTAPWENEPTDRKAADHWLPVDQYIGGIEHAILHLLYSRFFTRAMKVAGHVGVDEPFKGLFTQGMVVHETYKANGQWVSPADIRIEEIDGKRVATMLDSGAPVEIGSIEKMSKSKKNVVDPDDIIASYGADIARWFVLSDSPPERDVIWTEAGAEGAHRFVQRIWRLVAEAAPALKDVAPKAGTQGEALGVSKAAHKAVKAVGDDIEKLAFNRGVARLYELVNTLSGALQQAADGKADAEMKGALREATEMLVLMTAPMMPHLAEQCLAELGGKVAGKETLVARAPWPVFDPALVVENEIVLPVQINGKKRGDLTIARDADQASIQQAVLELDFVKAALNGGSPKKIIVVPQRIVNVVA.

Positions 43–53 match the 'HIGH' region motif; the sequence is PYPSGRIHMGH. A 'KMSKS' region motif is present at residues 628 to 632; sequence KMSKS. ATP is bound at residue K631.

It belongs to the class-I aminoacyl-tRNA synthetase family.

The protein localises to the cytoplasm. The catalysed reaction is tRNA(Leu) + L-leucine + ATP = L-leucyl-tRNA(Leu) + AMP + diphosphate. This is Leucine--tRNA ligase from Brucella suis biovar 1 (strain 1330).